The primary structure comprises 314 residues: uncharacterized protein (314 aa).

Positions methionine 1 to serine 18 are cleaved as a signal peptide. 4 N-linked (GlcNAc...) asparagine glycosylation sites follow: asparagine 68, asparagine 72, asparagine 106, and asparagine 256.

It is found in the secreted. This is an uncharacterized protein from Caenorhabditis elegans.